Reading from the N-terminus, the 1210-residue chain is Ice nucleation protein (1210 aa).

The interval 165 to 1156 (AVYGSTLTGA…LSGGENSTLI (992 aa)) is octapeptide periodicity.

The protein belongs to the bacterial ice nucleation protein family.

It localises to the cell outer membrane. Its function is as follows. Ice nucleation proteins enable bacteria to nucleate crystallization in supercooled water. The protein is Ice nucleation protein (inaW) of Pseudomonas fluorescens.